A 5112-amino-acid polypeptide reads, in one-letter code: Malformin synthetase mlfA (5112 aa).

An adenylation 1 region spans residues 225–616 (ERHAANRPHS…CGRADTQVKL (392 aa)). The Carrier 1 domain maps to 757–830 (SRLEQEIQLA…EAASLAEVQE (74 aa)). Serine 791 is modified (O-(pantetheine 4'-phosphoryl)serine). Residues 868–1299 (EDVFPCTTMQ…ALDSLTLLQA (432 aa)) are condensation 1. The tract at residues 1327-1716 (DRRVTRQPDT…GRKDTQVKLR (390 aa)) is adenylation 2. The region spanning 1854–1931 (TAASELERTL…QLAAELGESP (78 aa)) is the Carrier 2 domain. O-(pantetheine 4'-phosphoryl)serine is present on serine 1891. Disordered stretches follow at residues 1926–1961 (ELGE…DGVD) and 1994–2034 (GGSS…VPEP). 2 stretches are compositionally biased toward low complexity: residues 1930–1941 (SPRSSTSSASSS) and 1994–2012 (GGSS…SSSS). A condensation 2 region spans residues 2064-2479 (EDIYPATALQ…AVSYSDKQTL (416 aa)). Residues 2502–2894 (IRTPHAPAVC…IGRRDGQVKL (393 aa)) form an adenylation 3 region. A Carrier 3 domain is found at 3030-3106 (RPTTAKECEM…QLLFHLRNAK (77 aa)). Residue serine 3067 is modified to O-(pantetheine 4'-phosphoryl)serine. Condensation stretches follow at residues 3122-3586 (WVDL…TYEQ) and 3607-4044 (NIYP…EQLV). The segment at 4069 to 4459 (HSSRQAVCAW…VGRKDNQIKF (391 aa)) is adenylation 4. One can recognise a Carrier 4 domain in the interval 4593–4669 (MPSTEAECIM…DLARHNSLVQ (77 aa)). O-(pantetheine 4'-phosphoryl)serine is present on serine 4630. The interval 4724–5106 (IVVDIPGRIS…VEKVVALLRD (383 aa)) is condensation 5.

Belongs to the NRP synthetase family.

It participates in secondary metabolite biosynthesis. Nonribosomal peptide synthetase; part of the gene cluster that mediates the biosynthesis of malformins, cyclic pentapeptides with a disulfide bond between 2 consecutive cysteins, that show potential anti-tumor as well as antimalarial and antitrypanosomal properties. The nonribosomal peptide synthetase mlfA is responsible of the formation of the cyclic pentapeptide. MlfA probably acts iteratively on one amino acid and possesses multiple amino acid specificities since it is involved in the biosynthesis of multiple malformins, including malformin C and malformin A2. Malformin C corresponds to a cyclo[D-Cys-D-Cys-Val-D-Leu-Val] pentapeptide whereas malformin A2 corresponds to a cyclo[D-Cys-D-Cys-Val-D-Leu-Ile] pentapeptide. The malformin biosynthesis clusters in malformin-producing fungi also contain enzymes involved in the formation of the disulfide bond between the two consecutive cysteins within malformins, in addition to additional tailoring enzymes such as methyltransferases or oxidoreductases. They are also composed of up to 4 major facilitator superfamily transporters, and transcription factors probably involved in the regulation of the expression of those clusters. In Aspergillus brasiliensis (strain CBS 101740 / IMI 381727 / IBT 21946), this protein is Malformin synthetase mlfA.